We begin with the raw amino-acid sequence, 206 residues long: Outer-membrane lipoprotein LolB (206 aa).

Residues 1–18 (MKTFKFFTALFATAILTA) form the signal peptide. The N-palmitoyl cysteine moiety is linked to residue Cys19. The S-diacylglycerol cysteine moiety is linked to residue Cys19.

It belongs to the LolB family. Monomer.

The protein resides in the cell outer membrane. Plays a critical role in the incorporation of lipoproteins in the outer membrane after they are released by the LolA protein. The chain is Outer-membrane lipoprotein LolB from Haemophilus influenzae (strain PittGG).